Reading from the N-terminus, the 457-residue chain is Multidrug resistance protein MdtK (457 aa).

12 consecutive transmembrane segments (helical) span residues 11 to 31 (LLAL…MGVV), 46 to 66 (AVAV…GLLL), 93 to 113 (WLAF…DHII), 127 to 147 (AVGF…FQVL), 160 to 180 (GMVI…IFIY), 188 to 208 (LGGV…FLMM), 243 to 263 (LPVA…ALLV), 278 to 300 (LNFS…IRVG), 316 to 336 (YTSI…TVVF), 350 to 370 (VVVM…SDAI), 387 to 407 (IFFI…YLLG), and 418 to 438 (PSGF…LMAL).

Belongs to the multi antimicrobial extrusion (MATE) (TC 2.A.66.1) family. MdtK subfamily.

It localises to the cell inner membrane. Functionally, multidrug efflux pump that functions probably as a Na(+)/drug antiporter. This chain is Multidrug resistance protein MdtK, found in Yersinia enterocolitica serotype O:8 / biotype 1B (strain NCTC 13174 / 8081).